A 275-amino-acid chain; its full sequence is C-type lectin domain family 12 member B (275 aa).

The Cytoplasmic segment spans residues 1–41; sequence MSDEVTYATLMLQDSARVRGNQDGNNLRKEGHPAQSSLWRG. The ITIM motif motif lies at 5–10; it reads VTYATL. A Phosphotyrosine modification is found at Tyr-7. Residues 42-64 form a helical; Signal-anchor for type II membrane protein membrane-spanning segment; the sequence is AALSLMTLCLVLVTGLVTLATMF. The Extracellular segment spans residues 65–275; sequence LQVSNDINSD…ASLVKTEDLD (211 aa). N-linked (GlcNAc...) asparagine glycosylation is found at Asn-91, Asn-175, and Asn-236. A C-type lectin domain is found at 149 to 263; that stretch reads YGNSCYYFSI…CSAEIPWICE (115 aa). Cystine bridges form between Cys-171–Cys-262 and Cys-241–Cys-254.

In terms of assembly, homodimer. Interacts (via ITIM motif) with PTPN6. Interacts (via ITIM motif) with PTPN11; this interaction triggers dephosphorylation and activation of PTPN11.

It localises to the cell membrane. In terms of biological role, inhibitory receptor postulated to negatively regulate immune and non-immune functions. Upon phosphorylation, recruits SH2 domain-containing PTPN6 and PTPN11 phosphatases to its ITIM motif and antagonizes activation signals. Although it inhibits KLRK1/NKG2D-mediated signaling, it does not bind known ligands of KLRK1/NKG2D and therefore is not its inhibitory counterpart. May limit activation of myeloid cell subsets in response to infection or tissue inflammation. May protect target cells against natural killer cell-mediated lysis. May negatively regulate cell cycle and differentiation of melanocytes via inactivation of STAT3. The chain is C-type lectin domain family 12 member B (Clec12b) from Mus musculus (Mouse).